Reading from the N-terminus, the 259-residue chain is Short chain dehydrogenase ausX (259 aa).

Residues Ile13, Asp59, Arg121, Tyr153, Lys157, and Val186 each contribute to the NADP(+) site. The active-site Proton acceptor is Tyr153. The active-site Proton donor is the Tyr153. The active-site Lowers pKa of active site Tyr is the Lys157.

It belongs to the short-chain dehydrogenases/reductases (SDR) family.

The protein operates within secondary metabolite biosynthesis; terpenoid biosynthesis. Functionally, short chain dehydrogenase; part of the gene cluster A that mediates the biosynthesis of the fungal meroterpenoid acetoxydehydroaustin. The first step of the pathway is the synthesis of 3,5-dimethylorsellinic acid by the polyketide synthase ausA. 3,5-dimethylorsellinic acid is then prenylated by the polyprenyl transferase ausN. Further epoxidation by the FAD-dependent monooxygenase ausM and cyclization by the probable terpene cyclase ausL lead to the formation of protoaustinoid A. Protoaustinoid A is then oxidized to spiro-lactone preaustinoid A3 by the combined action of the FAD-binding monooxygenases ausB and ausC, and the dioxygenase ausE. Acid-catalyzed keto-rearrangement and ring contraction of the tetraketide portion of preaustinoid A3 by ausJ lead to the formation of preaustinoid A4. The aldo-keto reductase ausK, with the help of ausH, is involved in the next step by transforming preaustinoid A4 into isoaustinone which is in turn hydroxylated by the P450 monooxygenase ausI to form austinolide. The cytochrome P450 monooxygenase ausG then modifies austinolide to austinol. Austinol is further acetylated to austin by the O-acetyltransferase ausP, which spontaneously changes to dehydroaustin. The cytochrome P450 monooxygenase then converts dehydroaustin is into 7-dehydrodehydroaustin. The hydroxylation catalyzed by ausR permits the second O-acetyltransferase ausQ to add an additional acetyl group to the molecule, leading to the formation of acetoxydehydroaustin. Due to genetic rearrangements of the clusters and the subsequent loss of some enzymes, the end product of the Penicillium brasilianum austinoid biosynthesis clusters is acetoxydehydroaustin. The polypeptide is Short chain dehydrogenase ausX (Penicillium brasilianum).